The sequence spans 438 residues: Histidine--tRNA ligase (438 aa).

Belongs to the class-II aminoacyl-tRNA synthetase family. Homodimer.

The protein resides in the cytoplasm. The catalysed reaction is tRNA(His) + L-histidine + ATP = L-histidyl-tRNA(His) + AMP + diphosphate + H(+). This chain is Histidine--tRNA ligase (hisS), found in Thermobifida fusca (strain YX).